The following is a 142-amino-acid chain: uncharacterized protein (142 aa).

One can recognise an N-acetyltransferase domain in the interval Ile2 to Val142.

It belongs to the acetyltransferase family.

This is an uncharacterized protein from Bacillus subtilis (strain 168).